We begin with the raw amino-acid sequence, 910 residues long: DNA mismatch repair protein MutS (910 aa).

Over residues 1-11 (MEAKVEEKEPE) the composition is skewed to basic and acidic residues. Residues 1–21 (MEAKVEEKEPEPVENAGPDAP) form a disordered region. 658–665 (GPNMGGKS) is a binding site for ATP.

Belongs to the DNA mismatch repair MutS family.

In terms of biological role, this protein is involved in the repair of mismatches in DNA. It is possible that it carries out the mismatch recognition step. This protein has a weak ATPase activity. In Brucella suis (strain ATCC 23445 / NCTC 10510), this protein is DNA mismatch repair protein MutS.